A 291-amino-acid polypeptide reads, in one-letter code: ATP synthase gamma chain (291 aa).

The protein belongs to the ATPase gamma chain family. As to quaternary structure, F-type ATPases have 2 components, CF(1) - the catalytic core - and CF(0) - the membrane proton channel. CF(1) has five subunits: alpha(3), beta(3), gamma(1), delta(1), epsilon(1). CF(0) has three main subunits: a, b and c.

It localises to the cell membrane. Its function is as follows. Produces ATP from ADP in the presence of a proton gradient across the membrane. The gamma chain is believed to be important in regulating ATPase activity and the flow of protons through the CF(0) complex. The polypeptide is ATP synthase gamma chain (Streptococcus pyogenes serotype M49 (strain NZ131)).